Consider the following 246-residue polypeptide: Complement C1q subcomponent subunit C (246 aa).

A signal peptide spans 1–29 (MVVGPSCQPPCGLCLLLLFLLALPLRSQA). Residues 32 to 113 (GCYGIPGMPG…GPPGEPGVEG (82 aa)) enclose the Collagen-like domain. P37, P40, P43, P46, and P64 each carry 4-hydroxyproline. Positions 44–116 (GAPGKDGHDG…GEPGVEGRYK (73 aa)) are disordered. K76 is modified (5-hydroxylysine). The O-linked (Gal...) hydroxylysine glycan is linked to K76. Residues P82, P97, P100, and P106 each carry the 4-hydroxyproline modification. Positions 99-108 (DPGPRGPPGE) are enriched in pro residues. One can recognise a C1q domain in the interval 116-246 (KQKHQSVFTV…VFSGFLLFPD (131 aa)). The cysteines at positions 180 and 194 are disulfide-linked.

In terms of assembly, core component of the complement C1 complex, a calcium-dependent complex composed of 1 molecule of the C1Q subcomplex, 2 molecules of C1R and 2 molecules of C1S. The C1Q subcomplex is composed 18 subunits: 3 chains of C1QA, C1QB, and C1QC trimerize to form 6 collagen-like triple helices connected to six globular ligand-recognition modules (C1q domain). In terms of processing, O-linked glycans consist of Glc-Gal disaccharides bound to the oxygen atom of post-translationally added hydroxyl groups.

The protein resides in the secreted. The protein localises to the cell surface. With respect to regulation, the C1Q subcomplex is inhibited by sulfated molecules, such as triterpenoid sulfates, heparan sulfate, or chondroitin sulfates. Functionally, core component of the complement C1 complex, a multiprotein complex that initiates the classical pathway of the complement system, a cascade of proteins that leads to phagocytosis and breakdown of pathogens and signaling that strengthens the adaptive immune system. The classical complement pathway is initiated by the C1Q subcomplex of the C1 complex, which specifically binds IgG or IgM immunoglobulins complexed with antigens, forming antigen-antibody complexes on the surface of pathogens: C1QA, together with C1QB and C1QC, specifically recognizes and binds the Fc regions of IgG or IgM via its C1q domain. Immunoglobulin-binding activates the proenzyme C1R, which cleaves C1S, initiating the proteolytic cascade of the complement system. The C1Q subcomplex is activated by a hexamer of IgG complexed with antigens, while it is activated by a pentameric IgM. The C1Q subcomplex also recognizes and binds phosphatidylserine exposed on the surface of cells undergoing programmed cell death, possibly promoting activation of the complement system. The polypeptide is Complement C1q subcomponent subunit C (Mus musculus (Mouse)).